We begin with the raw amino-acid sequence, 302 residues long: Acetylxylan esterase (302 aa).

The N-terminal stretch at 1 to 20 (MPSVKETLTLLLSQAFLATG) is a signal peptide. A propeptide spanning residues 21–31 (SPVDGETVVKR) is cleaved from the precursor. Glutamine 32 is subject to Pyrrolidone carboxylic acid. Asparagine 94 carries an N-linked (GlcNAc...) asparagine glycan. Serine 121 is an active-site residue. The disordered stretch occupies residues 236-273 (QLSSGGSQPPGGGPTSTSRPTSTRTGSSPGPTQTHWGQ). Residues 244 to 266 (PPGGGPTSTSRPTSTRTGSSPGP) are linker. Over residues 250–269 (TSTSRPTSTRTGSSPGPTQT) the composition is skewed to low complexity. The 37-residue stretch at 266–302 (PTQTHWGQCGGQGWTGPTQCESGTTCQVISQWYSQCL) folds into the CBM1 domain. Disulfide bonds link cysteine 274–cysteine 291 and cysteine 285–cysteine 301.

It belongs to the cutinase family. Acetylxylan esterase subfamily. As to quaternary structure, monomer. Glycosylated.

The protein localises to the secreted. The catalysed reaction is Deacetylation of xylans and xylo-oligosaccharides.. The protein operates within glycan degradation; xylan degradation. Its activity is regulated as follows. Inhibited by phenylmethylsulfonyl flouride. In terms of biological role, degrades acetylated xylans by cleaving acetyl side groups from the hetero-xylan backbone. In Hypocrea jecorina (Trichoderma reesei), this protein is Acetylxylan esterase (axe1).